Consider the following 445-residue polypeptide: Argininosuccinate synthase (445 aa).

Residues 17–25 (AFSGGLDTS) and A43 each bind ATP. L-citrulline is bound at residue Y99. ATP-binding residues include G129 and T131. Residues T131, N135, and D136 each coordinate L-aspartate. Residue N135 coordinates L-citrulline. Position 136 (D136) interacts with ATP. L-citrulline contacts are provided by R139 and S192. D194 lines the ATP pocket. T201, E203, and E280 together coordinate L-citrulline.

It belongs to the argininosuccinate synthase family. Type 2 subfamily. In terms of assembly, homotetramer.

The protein localises to the cytoplasm. It catalyses the reaction L-citrulline + L-aspartate + ATP = 2-(N(omega)-L-arginino)succinate + AMP + diphosphate + H(+). It participates in amino-acid biosynthesis; L-arginine biosynthesis; L-arginine from L-ornithine and carbamoyl phosphate: step 2/3. In Burkholderia multivorans (strain ATCC 17616 / 249), this protein is Argininosuccinate synthase (argG).